The primary structure comprises 287 residues: Nucleotide-binding protein Gbem_0872 (287 aa).

Residue 8–15 (GLSGSGKS) participates in ATP binding. 59-62 (DIRS) lines the GTP pocket.

The protein belongs to the RapZ-like family.

Functionally, displays ATPase and GTPase activities. The sequence is that of Nucleotide-binding protein Gbem_0872 from Citrifermentans bemidjiense (strain ATCC BAA-1014 / DSM 16622 / JCM 12645 / Bem) (Geobacter bemidjiensis).